The following is a 197-amino-acid chain: Probable GTP-binding protein EngB (197 aa).

The EngB-type G domain occupies 2–186; that stretch reads KVKEVIFAGR…KRDLKQYLLS (185 aa). GTP-binding positions include 10-17, 35-39, 52-55, 132-135, and 166-168; these read GRSNVGKS, GTTIR, DLPG, NKMD, and VCA. Mg(2+) contacts are provided by Ser-17 and Thr-37.

The protein belongs to the TRAFAC class TrmE-Era-EngA-EngB-Septin-like GTPase superfamily. EngB GTPase family. Mg(2+) is required as a cofactor.

Functionally, necessary for normal cell division and for the maintenance of normal septation. This is Probable GTP-binding protein EngB from Archaeoglobus fulgidus (strain ATCC 49558 / DSM 4304 / JCM 9628 / NBRC 100126 / VC-16).